We begin with the raw amino-acid sequence, 155 residues long: 6,7-dimethyl-8-ribityllumazine synthase (155 aa).

5-amino-6-(D-ribitylamino)uracil contacts are provided by residues Phe-23, 57-59 (AYE), and 81-83 (AVI). 86 to 87 (AT) is a binding site for (2S)-2-hydroxy-3-oxobutyl phosphate. Residue His-89 is the Proton donor of the active site. Residue Phe-114 coordinates 5-amino-6-(D-ribitylamino)uracil. Arg-128 contributes to the (2S)-2-hydroxy-3-oxobutyl phosphate binding site.

The protein belongs to the DMRL synthase family.

The enzyme catalyses (2S)-2-hydroxy-3-oxobutyl phosphate + 5-amino-6-(D-ribitylamino)uracil = 6,7-dimethyl-8-(1-D-ribityl)lumazine + phosphate + 2 H2O + H(+). It participates in cofactor biosynthesis; riboflavin biosynthesis; riboflavin from 2-hydroxy-3-oxobutyl phosphate and 5-amino-6-(D-ribitylamino)uracil: step 1/2. Catalyzes the formation of 6,7-dimethyl-8-ribityllumazine by condensation of 5-amino-6-(D-ribitylamino)uracil with 3,4-dihydroxy-2-butanone 4-phosphate. This is the penultimate step in the biosynthesis of riboflavin. The polypeptide is 6,7-dimethyl-8-ribityllumazine synthase (Desulfotalea psychrophila (strain LSv54 / DSM 12343)).